The sequence spans 394 residues: Phosphopentomutase (394 aa).

D14, D287, H292, D328, H329, and H340 together coordinate Mn(2+).

It belongs to the phosphopentomutase family. Mn(2+) serves as cofactor.

It localises to the cytoplasm. The catalysed reaction is 2-deoxy-alpha-D-ribose 1-phosphate = 2-deoxy-D-ribose 5-phosphate. It catalyses the reaction alpha-D-ribose 1-phosphate = D-ribose 5-phosphate. It functions in the pathway carbohydrate degradation; 2-deoxy-D-ribose 1-phosphate degradation; D-glyceraldehyde 3-phosphate and acetaldehyde from 2-deoxy-alpha-D-ribose 1-phosphate: step 1/2. Functionally, isomerase that catalyzes the conversion of deoxy-ribose 1-phosphate (dRib-1-P) and ribose 1-phosphate (Rib-1-P) to deoxy-ribose 5-phosphate (dRib-5-P) and ribose 5-phosphate (Rib-5-P), respectively. The polypeptide is Phosphopentomutase (Listeria welshimeri serovar 6b (strain ATCC 35897 / DSM 20650 / CCUG 15529 / CIP 8149 / NCTC 11857 / SLCC 5334 / V8)).